The primary structure comprises 310 residues: Mitogen-activated protein kinase kinase 9 (310 aa).

Positions 47 to 306 constitute a Protein kinase domain; the sequence is LEKLNVLGCG…APQLLAHPFL (260 aa). ATP is bound by residues 53–61 and Lys76; that span reads LGCGNGGIV. Asp167 (proton acceptor) is an active-site residue. A phosphoserine mark is found at Ser195 and Ser201. Phosphothreonine is present on Thr205.

This sequence belongs to the protein kinase superfamily. STE Ser/Thr protein kinase family. MAP kinase kinase subfamily. In terms of processing, phosphorylation at Ser-195 and Ser-201 by MAP kinase kinase kinases positively regulates kinase activity. Autophosphorylated.

The protein localises to the cytoplasm. It is found in the nucleus. The enzyme catalyses L-seryl-[protein] + ATP = O-phospho-L-seryl-[protein] + ADP + H(+). It catalyses the reaction L-threonyl-[protein] + ATP = O-phospho-L-threonyl-[protein] + ADP + H(+). The catalysed reaction is L-tyrosyl-[protein] + ATP = O-phospho-L-tyrosyl-[protein] + ADP + H(+). MKK9-MPK3/MPK6 module phosphorylates and activates EIN3, leading to the promotion of EIN3-mediated transcription in ethylene signaling. Autophosphorylates and also phosphorylates MPK3 and MPK6. Plays an important role in ethylene and camalexin biosynthesis and in salt stress response. MKK9-MPK6 module positively regulates leaf senescence. The protein is Mitogen-activated protein kinase kinase 9 (MKK9) of Arabidopsis thaliana (Mouse-ear cress).